The primary structure comprises 753 residues: MGSGTSTQHHFAFQNAERAFKAAALIQRWYRRYVARLEMRRRCTWSIFQSIEYAGQQDQVKLHDFFSYLMDHFIPSSHNDRDFLTRIFTEDRFAQDSEMKKCSDYESIEVPDSYTGPRLSFPLLPDHATALVEAFRLKQQLHARYVLNLLYETKKHLVQLPNINRVSTCYSEEITVCGDLHGQLDDLIFIFYKNGLPSPERSYVFNGDFVDRGKDSVEILMILFAFMLVYPKEFHLNRGNHEDHMVNLRYGFTKEVMNKYKVHGKEILRTLQDVFCWLPLATLIDEKVLILHGGVSDITDLELLDKIERSKIVSTMRCKTRQKSEKQMEEKRRANQKSSAQGPIPWFLPESRSLPSSPLRLGSYKAQKTSRSSSIPCSGSLDGRELSRQVRSSVELELERCRQQAGLLVTGEKEEPSRSASEADSEAGELRKPTQEEWRQVVDILWSDPMAQEGCKANTIRGGGCYFGPDVTQQLLQKYNMQFLIRSHECKPEGYEFCHNRKVLTIFSASNYYEVGSNRGAYVKLGPALTPHIVQYQANKVTHTLTMRQRISRVEESALRALREKLFAHSSDLLSEFKKHDADKVGLITLSDWAAAVESVLHLGLPWRMLRPQLVNSSADNMLEYKSWLKNLAKEQLSRENIQSSLLETLYRNRSNLETIFRIIDSDHSGFISLDEFRQTWKLFSSHMNIDITDDCICDLARSIDFNKDGHIDINEFLEAFRLVEKSCPEGDASECPQATNAKDSGCSSPGAH.

The 26-residue stretch at 21–46 folds into the IQ domain; the sequence is KAAALIQRWYRRYVARLEMRRRCTWS. A catalytic region spans residues 128-540; it reads ATALVEAFRL…PHIVQYQANK (413 aa). Mn(2+)-binding residues include D179, H181, D208, and N240. Catalysis depends on H241, which acts as the Proton donor. H292 serves as a coordination point for Mn(2+). 2 disordered regions span residues 318–382 and 409–435; these read CKTR…GSLD and VTGEKEEPSRSASEADSEAGELRKPTQ. Basic and acidic residues predominate over residues 322–333; it reads QKSEKQMEEKRR. The span at 348 to 361 shows a compositional bias: low complexity; it reads LPESRSLPSSPLRL. Residues 366–377 show a composition bias toward polar residues; it reads AQKTSRSSSIPC. Position 488 (H488) interacts with Mn(2+). EF-hand domains are found at residues 568-603, 652-687, and 692-727; these read AHSSDLLSEFKKHDADKVGLITLSDWAAAVESVLHL, RNRSNLETIFRIIDSDHSGFISLDEFRQTWKLFSSH, and ITDDCICDLARSIDFNKDGHIDINEFLEAFRLVEKS. Ca(2+)-binding residues include D665, D667, S669, E676, D705, N707, D709, H711, and E716. The interval 732–753 is disordered; the sequence is DASECPQATNAKDSGCSSPGAH. Residues 737–753 are compositionally biased toward polar residues; sequence PQATNAKDSGCSSPGAH.

This sequence belongs to the PPP phosphatase family. Mn(2+) is required as a cofactor. In terms of tissue distribution, retinal specific.

The protein resides in the cytoplasm. It is found in the cell projection. Its subcellular location is the cilium. It localises to the photoreceptor outer segment. The protein localises to the photoreceptor inner segment. The catalysed reaction is O-phospho-L-seryl-[protein] + H2O = L-seryl-[protein] + phosphate. It carries out the reaction O-phospho-L-threonyl-[protein] + H2O = L-threonyl-[protein] + phosphate. Its activity is regulated as follows. Activated by calcium. In terms of biological role, may play a role in phototransduction. May dephosphorylate photoactivated rhodopsin. May function as a calcium sensing regulator of ionic currents, energy production or synaptic transmission. The sequence is that of Serine/threonine-protein phosphatase with EF-hands 2 (PPEF2) from Homo sapiens (Human).